The following is a 217-amino-acid chain: MASTGLELLGMTLAVLGWLGTLVSCALPLWKVTAFIGNSIVVAQVVWEGLWMSCVVQSTGQMQCKVYDSLLALPQDLQAARALCVIALLLALLGLLVAITGAQCTTCVEDEGAKARIVLTAGVILLLAGILVLIPVCWTAHAIIQDFYNPLVAEALKRELGASLYLGWAAAALLMLGGGLLCCTCPPPQVERPRGPRLGYSIPSRSGASGLDKRDYV.

Over methionine 1–glutamate 7 the chain is Cytoplasmic. A helical membrane pass occupies residues leucine 8–proline 28. The Extracellular portion of the chain corresponds to leucine 29–arginine 81. A helical transmembrane segment spans residues alanine 82 to alanine 102. The Cytoplasmic segment spans residues glutamine 103–arginine 116. Residues isoleucine 117–cysteine 137 traverse the membrane as a helical segment. Topologically, residues tryptophan 138–glutamate 159 are extracellular. The helical transmembrane segment at leucine 160 to leucine 180 threads the bilayer. At leucine 181–valine 217 the chain is on the cytoplasmic side. The disordered stretch occupies residues arginine 194 to valine 217.

It belongs to the claudin family. Interacts with CLDN1, CD81 and OCLN. Expressed in the liver, in peripheral blood mononuclear cells and hepatocarcinoma cell lines.

The protein resides in the cell junction. It is found in the tight junction. Its subcellular location is the cell membrane. Plays a major role in tight junction-specific obliteration of the intercellular space, through calcium-independent cell-adhesion activity. Functionally, (Microbial infection) Acts as a receptor for hepatitis C virus (HCV) entry into hepatic cells. The sequence is that of Claudin-9 (CLDN9) from Homo sapiens (Human).